Here is a 433-residue protein sequence, read N- to C-terminus: Glutamate-1-semialdehyde 2,1-aminomutase (433 aa).

Position 271 is an N6-(pyridoxal phosphate)lysine (Lys-271).

This sequence belongs to the class-III pyridoxal-phosphate-dependent aminotransferase family. HemL subfamily. Homodimer. The cofactor is pyridoxal 5'-phosphate.

It is found in the cytoplasm. It catalyses the reaction (S)-4-amino-5-oxopentanoate = 5-aminolevulinate. It functions in the pathway porphyrin-containing compound metabolism; protoporphyrin-IX biosynthesis; 5-aminolevulinate from L-glutamyl-tRNA(Glu): step 2/2. Its pathway is porphyrin-containing compound metabolism; chlorophyll biosynthesis. In Prochlorococcus marinus (strain SARG / CCMP1375 / SS120), this protein is Glutamate-1-semialdehyde 2,1-aminomutase.